The following is a 300-amino-acid chain: Protoheme IX farnesyltransferase (300 aa).

Helical transmembrane passes span 20–40 (ITKAGLAISVLFSSIAGYLLG), 49–69 (WSVLIVLAIGGYCMVGASNAY), 97–117 (VTALIVASLLTIIGIVLLYTI), 122–142 (AMFAAISIFLYTSIYTPLKTV), 145–165 (LSVFVGAFPGAIPFMLGWVAA), 176–196 (LFLIQFFWQFPHFWSIGWFLY), 217–237 (ALQVILYTIWLIIASLLPVLG), 242–262 (LFISPVAAVLVFLLGLWMLFY), and 278–298 (LMLVSVSYISLLQIVFIVDKF).

The protein belongs to the UbiA prenyltransferase family. Protoheme IX farnesyltransferase subfamily.

It is found in the cell inner membrane. It catalyses the reaction heme b + (2E,6E)-farnesyl diphosphate + H2O = Fe(II)-heme o + diphosphate. It functions in the pathway porphyrin-containing compound metabolism; heme O biosynthesis; heme O from protoheme: step 1/1. Converts heme B (protoheme IX) to heme O by substitution of the vinyl group on carbon 2 of heme B porphyrin ring with a hydroxyethyl farnesyl side group. This is Protoheme IX farnesyltransferase from Flavobacterium johnsoniae (strain ATCC 17061 / DSM 2064 / JCM 8514 / BCRC 14874 / CCUG 350202 / NBRC 14942 / NCIMB 11054 / UW101) (Cytophaga johnsonae).